Here is a 501-residue protein sequence, read N- to C-terminus: 25-hydroxyvitamin D-1 alpha hydroxylase, mitochondrial (501 aa).

C448 contributes to the heme binding site.

It belongs to the cytochrome P450 family. Heme serves as cofactor. Kidney.

Its subcellular location is the mitochondrion membrane. The enzyme catalyses calcidiol + 2 reduced [adrenodoxin] + O2 + 2 H(+) = calcitriol + 2 oxidized [adrenodoxin] + H2O. The catalysed reaction is secalciferol + 2 reduced [adrenodoxin] + O2 + 2 H(+) = calcitetrol + 2 oxidized [adrenodoxin] + H2O. It functions in the pathway hormone biosynthesis; cholecalciferol biosynthesis. In terms of biological role, catalyzes the conversion of 25-hydroxyvitamin D3 (25(OH)D3) to 1-alpha,25-dihydroxyvitamin D3 (1alpha,25(OH)(2)D3), and of 24,25-dihydroxyvitamin D3 (24,25(OH)(2)D3) to 1-alpha,24,25-trihydroxyvitamin D3 (1alpha,24,25(OH)(3)D3). Is also active with 25-hydroxy-24-oxo-vitamin D3. Plays an important role in normal bone growth, calcium metabolism, and tissue differentiation. In Rattus norvegicus (Rat), this protein is 25-hydroxyvitamin D-1 alpha hydroxylase, mitochondrial (Cyp27b1).